The chain runs to 248 residues: Triosephosphate isomerase (248 aa).

9-11 (NWK) is a substrate binding site. Catalysis depends on histidine 94, which acts as the Electrophile. The active-site Proton acceptor is glutamate 166. Substrate-binding positions include glycine 172, serine 212, and 233–234 (GG).

This sequence belongs to the triosephosphate isomerase family. As to quaternary structure, homodimer.

Its subcellular location is the cytoplasm. The catalysed reaction is D-glyceraldehyde 3-phosphate = dihydroxyacetone phosphate. It functions in the pathway carbohydrate biosynthesis; gluconeogenesis. It participates in carbohydrate degradation; glycolysis; D-glyceraldehyde 3-phosphate from glycerone phosphate: step 1/1. Functionally, involved in the gluconeogenesis. Catalyzes stereospecifically the conversion of dihydroxyacetone phosphate (DHAP) to D-glyceraldehyde-3-phosphate (G3P). The chain is Triosephosphate isomerase from Alkaliphilus oremlandii (strain OhILAs) (Clostridium oremlandii (strain OhILAs)).